The following is a 510-amino-acid chain: Cytochrome P450 monooxygenase penQ (510 aa).

A helical membrane pass occupies residues 9–26 (WIVTLIVAATTYCTLRWV). Residues N148 and N341 are each glycosylated (N-linked (GlcNAc...) asparagine). C448 provides a ligand contact to heme. N482 carries N-linked (GlcNAc...) asparagine glycosylation.

The protein belongs to the cytochrome P450 family. Heme is required as a cofactor.

The protein localises to the membrane. It functions in the pathway secondary metabolite biosynthesis. Cytochrome P450 monooxygenase; part of the gene cluster that mediates the biosynthesis of the indole diterpenes penitrems. The geranylgeranyl diphosphate (GGPP) synthase penG catalyzes the first step in penitrem biosynthesis via conversion of farnesyl pyrophosphate and isopentyl pyrophosphate into geranylgeranyl pyrophosphate (GGPP). Condensation of indole-3-glycerol phosphate with GGPP by the prenyl transferase penC then forms 3-geranylgeranylindole (3-GGI). Epoxidation by the FAD-dependent monooxygenase penM leads to a epoxidized-GGI that is substrate of the terpene cyclase penB for cyclization to yield paspaline. Paspaline is subsequently converted to 13-desoxypaxilline by the cytochrome P450 monooxygenase penP, the latter being then converted to paxilline by the cytochrome P450 monooxygenase penQ. Paxilline is converted to beta-paxitriol via C-10 ketoreduction by the short-chain dehydrogenase PC-15 which can be monoprenylated at the C-20 by the indole diterpene prenyltransferase penD. A two-step elimination (acetylation and elimination) process performed by the O-acetyltransferase PC-16 and the P.simplicissimum ptmI-ortholog not yet identified in P.crustosum, leads to the production of the prenylated form of penijanthine. The FAD-linked oxidoreductase ptmO then converts the prenylated form of penijanthine into PC-M5 which is in turn transformed into PC-M4 by the aromatic dimethylallyltransferase PC-22. A series of oxidation steps involving 4 cytochrome P450 monooxygenases (PC-21, PC-05, PC-23, PC-20) and a FAD-dependent monooxygenase (PC-14) are required for the transformation of PC-M4 to penitrems A and E. Synthesis of these final products is proposed to proceed via penitrems D and C (PC-21, PC-05, PC-14) and penitrems B and F (PC-21, PC-05, PC-14, PC-23). The chain is Cytochrome P450 monooxygenase penQ from Penicillium crustosum (Blue mold fungus).